Here is a 661-residue protein sequence, read N- to C-terminus: PAN2-PAN3 deadenylation complex subunit PAN3 (661 aa).

Disordered stretches follow at residues 1-26 (MASA…AREN) and 53-130 (DPHK…LRQD). A C3H1-type zinc finger spans residues 26–55 (NAKDTLCRNITIYGRCRYEDKGCAFNHDPH). Residues 75–102 (SFTPSLLSSNGSSPTSTPATTKKMTTIS) are compositionally biased toward low complexity. Residues 115–130 (SVVSRSNASTPGLRQD) show a composition bias toward polar residues. The tract at residues 263 to 524 (QTLPNTQLPA…NIDIFITGIS (262 aa)) is pseudokinase domain. ATP-binding positions include Arg-315, 364-371 (DYHPLSKT), and 424-425 (SK). A coiled-coil region spans residues 525-563 (SQLMSTFDSALHLDDQLTSDLSRELENGRLVRLMTKLNF). Residues 564-661 (VNERPEYEHD…ALMKPARRMH (98 aa)) form a knob domain region.

The protein belongs to the protein kinase superfamily. PAN3 family. In terms of assembly, homodimer. Forms a heterotrimer with a catalytic subunit pan2 to form the poly(A)-nuclease (PAN) deadenylation complex. Interacts (via PAM-2 motif) with poly(A)-binding protein pab1 (via PABC domain), conferring substrate specificity of the enzyme complex.

It is found in the cytoplasm. Functionally, regulatory subunit of the poly(A)-nuclease (PAN) deadenylation complex, one of two cytoplasmic mRNA deadenylases involved in mRNA turnover. PAN specifically shortens poly(A) tails of RNA and the activity is stimulated by poly(A)-binding protein pab1. PAN deadenylation is followed by rapid degradation of the shortened mRNA tails by the CCR4-NOT complex. Deadenylated mRNAs are then degraded by two alternative mechanisms, namely exosome-mediated 3'-5' exonucleolytic degradation, or deadenylation-dependent mRNA decaping and subsequent 5'-3' exonucleolytic degradation by xrn1. May also be involved in post-transcriptional maturation of mRNA poly(A) tails. pan3 acts as a positive regulator for PAN activity, recruiting the catalytic subunit pan2 to mRNA via its interaction with RNA and with pab1. This chain is PAN2-PAN3 deadenylation complex subunit PAN3, found in Neosartorya fischeri (strain ATCC 1020 / DSM 3700 / CBS 544.65 / FGSC A1164 / JCM 1740 / NRRL 181 / WB 181) (Aspergillus fischerianus).